Reading from the N-terminus, the 87-residue chain is Small ribosomal subunit protein bS20 (87 aa).

Belongs to the bacterial ribosomal protein bS20 family.

Binds directly to 16S ribosomal RNA. This is Small ribosomal subunit protein bS20 from Geobacter sulfurreducens (strain ATCC 51573 / DSM 12127 / PCA).